Consider the following 214-residue polypeptide: Thiamine-phosphate synthase (214 aa).

Residues 39–43 (QYRFK) and asparagine 71 each bind 4-amino-2-methyl-5-(diphosphooxymethyl)pyrimidine. Mg(2+) contacts are provided by aspartate 72 and aspartate 91. Position 110 (serine 110) interacts with 4-amino-2-methyl-5-(diphosphooxymethyl)pyrimidine. 136-138 (TKT) is a 2-[(2R,5Z)-2-carboxy-4-methylthiazol-5(2H)-ylidene]ethyl phosphate binding site. Lysine 139 is a 4-amino-2-methyl-5-(diphosphooxymethyl)pyrimidine binding site. 2-[(2R,5Z)-2-carboxy-4-methylthiazol-5(2H)-ylidene]ethyl phosphate contacts are provided by residues glycine 166 and 186–187 (VS).

This sequence belongs to the thiamine-phosphate synthase family. Requires Mg(2+) as cofactor.

It carries out the reaction 2-[(2R,5Z)-2-carboxy-4-methylthiazol-5(2H)-ylidene]ethyl phosphate + 4-amino-2-methyl-5-(diphosphooxymethyl)pyrimidine + 2 H(+) = thiamine phosphate + CO2 + diphosphate. The enzyme catalyses 2-(2-carboxy-4-methylthiazol-5-yl)ethyl phosphate + 4-amino-2-methyl-5-(diphosphooxymethyl)pyrimidine + 2 H(+) = thiamine phosphate + CO2 + diphosphate. It catalyses the reaction 4-methyl-5-(2-phosphooxyethyl)-thiazole + 4-amino-2-methyl-5-(diphosphooxymethyl)pyrimidine + H(+) = thiamine phosphate + diphosphate. The protein operates within cofactor biosynthesis; thiamine diphosphate biosynthesis; thiamine phosphate from 4-amino-2-methyl-5-diphosphomethylpyrimidine and 4-methyl-5-(2-phosphoethyl)-thiazole: step 1/1. Functionally, condenses 4-methyl-5-(beta-hydroxyethyl)thiazole monophosphate (THZ-P) and 2-methyl-4-amino-5-hydroxymethyl pyrimidine pyrophosphate (HMP-PP) to form thiamine monophosphate (TMP). In Hydrogenobaculum sp. (strain Y04AAS1), this protein is Thiamine-phosphate synthase.